Consider the following 336-residue polypeptide: Phenylalanine--tRNA ligase alpha subunit (336 aa).

Glu251 serves as a coordination point for Mg(2+).

Belongs to the class-II aminoacyl-tRNA synthetase family. Phe-tRNA synthetase alpha subunit type 1 subfamily. Tetramer of two alpha and two beta subunits. It depends on Mg(2+) as a cofactor.

It is found in the cytoplasm. The enzyme catalyses tRNA(Phe) + L-phenylalanine + ATP = L-phenylalanyl-tRNA(Phe) + AMP + diphosphate + H(+). This is Phenylalanine--tRNA ligase alpha subunit from Syntrophobacter fumaroxidans (strain DSM 10017 / MPOB).